The primary structure comprises 164 residues: Protein SprT (164 aa).

In terms of domain architecture, SprT-like spans Q14 to V156. H69 contributes to the Zn(2+) binding site. E70 is a catalytic residue. Residue H73 coordinates Zn(2+).

This sequence belongs to the SprT family. Requires Zn(2+) as cofactor.

Its subcellular location is the cytoplasm. This Pseudomonas savastanoi pv. phaseolicola (strain 1448A / Race 6) (Pseudomonas syringae pv. phaseolicola (strain 1448A / Race 6)) protein is Protein SprT.